A 400-amino-acid polypeptide reads, in one-letter code: Lipid-A-disaccharide synthase (400 aa).

This sequence belongs to the LpxB family.

It carries out the reaction a lipid X + a UDP-2-N,3-O-bis[(3R)-3-hydroxyacyl]-alpha-D-glucosamine = a lipid A disaccharide + UDP + H(+). It participates in bacterial outer membrane biogenesis; LPS lipid A biosynthesis. In terms of biological role, condensation of UDP-2,3-diacylglucosamine and 2,3-diacylglucosamine-1-phosphate to form lipid A disaccharide, a precursor of lipid A, a phosphorylated glycolipid that anchors the lipopolysaccharide to the outer membrane of the cell. The polypeptide is Lipid-A-disaccharide synthase (Acidobacterium capsulatum (strain ATCC 51196 / DSM 11244 / BCRC 80197 / JCM 7670 / NBRC 15755 / NCIMB 13165 / 161)).